A 1018-amino-acid chain; its full sequence is DNA polymerase gamma (1018 aa).

Belongs to the DNA polymerase type-A family. The cofactor is Mg(2+).

It is found in the mitochondrion. The catalysed reaction is DNA(n) + a 2'-deoxyribonucleoside 5'-triphosphate = DNA(n+1) + diphosphate. Involved in the replication of mitochondrial DNA. The sequence is that of DNA polymerase gamma (mip1) from Schizosaccharomyces pombe (strain 972 / ATCC 24843) (Fission yeast).